Consider the following 117-residue polypeptide: uncharacterized protein (117 aa).

This is an uncharacterized protein from Escherichia coli (strain K12).